The sequence spans 452 residues: UDP-N-acetylmuramoylalanine--D-glutamate ligase (452 aa).

Residue 119–125 (GSNGKTT) coordinates ATP.

This sequence belongs to the MurCDEF family.

It localises to the cytoplasm. The catalysed reaction is UDP-N-acetyl-alpha-D-muramoyl-L-alanine + D-glutamate + ATP = UDP-N-acetyl-alpha-D-muramoyl-L-alanyl-D-glutamate + ADP + phosphate + H(+). It functions in the pathway cell wall biogenesis; peptidoglycan biosynthesis. In terms of biological role, cell wall formation. Catalyzes the addition of glutamate to the nucleotide precursor UDP-N-acetylmuramoyl-L-alanine (UMA). In Streptococcus equi subsp. zooepidemicus (strain MGCS10565), this protein is UDP-N-acetylmuramoylalanine--D-glutamate ligase.